The chain runs to 365 residues: Protein Tob1 (365 aa).

The Bipartite nuclear localization signal signature appears at 22 to 39 (RRRVNIFGEELERLLKQK). The segment at 82–92 (VRGNLPQDLSV) is important for nuclear localization. Positions 144–160 (DPASSVSSSPSPPFGHS) are enriched in low complexity. The disordered stretch occupies residues 144 to 171 (DPASSVSSSPSPPFGHSAAVSPTFMPRS). A required for interaction with CPEB3 region spans residues 161–220 (AAVSPTFMPRSTQPLTFTTATFAATKFGSTKMKNSGRSSKVARTSPISLGLNVNVNDLLK). Thr204 is modified (phosphothreonine). A Nuclear export signal motif is present at residues 228 to 236 (MHSLYGLGL). The segment at 233 to 287 (GLGLGSQQQPQPQPQQPPSQPPPPPPPPQQQQQHQQQQQQQQQQQQQPQQQTSAL) is disordered. Pro residues predominate over residues 243 to 261 (QPQPQQPPSQPPPPPPPPQ). The span at 262 to 283 (QQQQHQQQQQQQQQQQQQPQQQ) shows a compositional bias: low complexity.

The protein belongs to the BTG family. As to quaternary structure, interacts with ERBB2. Interacts with CNOT7. Interacts with CPEB3 (via C-terminal RNA-binding region); recruits CNOT7 to CPEB3 to form a ternary complex required for mRNA deadenylation and decay. Interacts with CNOT8. Interacts with CPEB4. Phosphorylated on Ser and Thr residues.

The protein localises to the cytoplasm. Its subcellular location is the nucleus. Anti-proliferative protein; the function is mediated by association with deadenylase subunits of the CCR4-NOT complex. Mediates CPEB3-accelerated mRNA deadenylation by binding to CPEB3 and recruiting CNOT7 which leads to target mRNA deadenylation and decay. In Rattus norvegicus (Rat), this protein is Protein Tob1 (Tob1).